We begin with the raw amino-acid sequence, 432 residues long: MTRDHFRSAQMFAEAQKYMPGGVNSPVRAFKAVGGDPIFFLRGEGALLFDVDGNRYIDYVASWGPLILGHAHPLVVRAVKECAEFGTSFGAPNELEIELARLLVEALPSVEMVRLVNSGTEATMSALRLARAYTKREKIVKFEGCYHGHADALLVKAGSGALTLGVPTSPGVPEDTARNTVVAGFNDLEGLKELFARLGEEIAAVIVEPVPANMGLVLPRPGFLKGLRDLTAAYGALLVFDEVITGFRLSYGGAQNLYGVQPDLTCLGKIIGGGLPVGAYGGRRDIMEQVAPSGPVYQAGTLSGNPLAMAAGISTIKALAEPGVYEALESKTLRLARGLEEAAARAGAEVYITQTGSMLCVFFQPGPVTDFAGALRSDTARYSRYFQALLERGVYIAPAQFEALFLSTAHTDEHIDRTLEACEEAFRFAFSG.

Position 269 is an N6-(pyridoxal phosphate)lysine (Lys269).

The protein belongs to the class-III pyridoxal-phosphate-dependent aminotransferase family. HemL subfamily. In terms of assembly, homodimer. The cofactor is pyridoxal 5'-phosphate.

It localises to the cytoplasm. The enzyme catalyses (S)-4-amino-5-oxopentanoate = 5-aminolevulinate. It participates in porphyrin-containing compound metabolism; protoporphyrin-IX biosynthesis; 5-aminolevulinate from L-glutamyl-tRNA(Glu): step 2/2. In Desulforudis audaxviator (strain MP104C), this protein is Glutamate-1-semialdehyde 2,1-aminomutase.